The following is a 139-amino-acid chain: Large ribosomal subunit protein uL16 (139 aa).

The span at 1–16 (MLIPKRTKYRKQHRPV) shows a compositional bias: basic residues. Residues 1 to 22 (MLIPKRTKYRKQHRPVRSGMSK) form a disordered region.

Belongs to the universal ribosomal protein uL16 family. Part of the 50S ribosomal subunit.

Its function is as follows. Binds 23S rRNA and is also seen to make contacts with the A and possibly P site tRNAs. The sequence is that of Large ribosomal subunit protein uL16 from Bifidobacterium longum (strain DJO10A).